The sequence spans 483 residues: Sodium/pantothenate symporter (483 aa).

At 1 to 2 (MQ) the chain is on the periplasmic side. Residues 3–23 (LEVILPLVAYLVVVFGISVYA) traverse the membrane as a helical segment. The Cytoplasmic portion of the chain corresponds to 24–42 (MRKRSTGTFLNEYFLGSRS). A helical membrane pass occupies residues 43-63 (MGGIVLAMTLTATYISASSFI). Topologically, residues 64–73 (GGPGAAYKYG) are periplasmic. Residues 74–94 (LGWVLLAMIQLPAVWLSLGIL) form a helical membrane-spanning segment. The Cytoplasmic segment spans residues 95–123 (GKKFAILARRYNAVTLNDMLFARYQSRLL). Residues 124–144 (VWLASLSLLVAFVGAMTVQFI) traverse the membrane as a helical segment. The Periplasmic portion of the chain corresponds to 145-157 (GGARLLETAAGIP). A helical transmembrane segment spans residues 158-178 (YETGLLIFGISIALYTAFGGF). At 179-189 (RASVLNDTMQG) the chain is on the cytoplasmic side. The chain crosses the membrane as a helical span at residues 190 to 210 (LVMLIGTVVLLIGVVHAAGGL). Residues 211-232 (SNAVQTLQTIDPQLVTPQGADD) are Periplasmic-facing. The chain crosses the membrane as a helical span at residues 233–253 (ILSPAFMTSFWVLVCFGVIGL). Residues 254–272 (PHTAVRCISYKDSKAVHRG) lie on the Cytoplasmic side of the membrane. A helical transmembrane segment spans residues 273 to 293 (IIIGTIVVAILMFGMHLAGAL). At 294-305 (GRAVIPDLTVPD) the chain is on the periplasmic side. The chain crosses the membrane as a helical span at residues 306–326 (LVIPTLMVKVLPPFAAGIFLA). The Cytoplasmic segment spans residues 327–368 (APMAAIMSTINAQLLQSSATIIKDLYLNIRPDQMQNETRLKR). Residues 369 to 389 (MSAVITLVLGALLLLAAWKPP) form a helical membrane-spanning segment. Topologically, residues 390-391 (EM) are periplasmic. Residues 392-412 (IIWLNLLAFGGLEAVFLWPLV) traverse the membrane as a helical segment. At 413–423 (LGLYWERANAK) the chain is on the cytoplasmic side. Residues 424–444 (GALSAMIVGGVLYAVLATLNI) form a helical membrane-spanning segment. Position 445 (glutamine 445) is a topological domain, periplasmic. The chain crosses the membrane as a helical span at residues 446–466 (YLGFHPIVPSLLLSLLAFLVG). Topologically, residues 467–483 (NRFGTSVPQATVLTTDK) are cytoplasmic.

Belongs to the sodium:solute symporter (SSF) (TC 2.A.21) family.

The protein resides in the cell inner membrane. It catalyses the reaction (R)-pantothenate(in) + Na(+)(in) = (R)-pantothenate(out) + Na(+)(out). Pantothenate uptake is not reduced in osmotically shocked cells or by ATP depletion with arsenate, but is reduced greater than 90% by the dissipation of the membrane electrochemical gradient with 2,4-dinitrophenol. Catalyzes the sodium-dependent uptake of extracellular pantothenate. This Escherichia coli (strain K12) protein is Sodium/pantothenate symporter.